Reading from the N-terminus, the 760-residue chain is Semaphorin-4A (760 aa).

The signal sequence occupies residues 1-32 (MALPSLGQDSWSLLRVFFFQLFLLPSLPPASG). The Extracellular segment spans residues 33–682 (TGGQGPMPRV…MAAQRSYWPH (650 aa)). A Sema domain is found at 36–494 (QGPMPRVKYH…FSGGIWRVPR (459 aa)). A disulfide bridge links Cys113 with Cys124. Residues Asn120 and Asn135 are each glycosylated (N-linked (GlcNAc...) asparagine). Cystine bridges form between Cys142–Cys151, Cys269–Cys379, and Cys293–Cys339. N-linked (GlcNAc...) asparagine glycosylation occurs at Asn496. The 52-residue stretch at 496 to 547 (NCSVYESCVDCVLARDPHCAWDPESRLCSLLSGSTKPWKQDMERGNPEWVCT) folds into the PSI domain. 3 cysteine pairs are disulfide-bonded: Cys497-Cys514, Cys506-Cys523, and Cys579-Cys623. One can recognise an Ig-like C2-type domain in the interval 572–630 (NSILELPCPHLSALASYHWSHGRAKISEASATVYNGSLLLLPQDGVGGLYQCVATENGY). Asn606 carries an N-linked (GlcNAc...) asparagine glycan. A helical transmembrane segment spans residues 683-703 (FLIVTVLLAIVLLGVLTLLLA). Over 704–760 (SPLGALRARGKVQGCGMLPPREKAPLSRDQHLQPSKDHRTSASDVDADNNHLGAEVA) the chain is Cytoplasmic. The disordered stretch occupies residues 720-760 (MLPPREKAPLSRDQHLQPSKDHRTSASDVDADNNHLGAEVA). Over residues 723–744 (PREKAPLSRDQHLQPSKDHRTS) the composition is skewed to basic and acidic residues.

The protein belongs to the semaphorin family. Interacts with PLXNB1, PLXNB2 and PLXNB3. Interacts with PLXND1. Interacts with TIMD2. Expressed in neurons and glia in the developing hippocampus.

It is found in the cell membrane. In terms of biological role, cell surface receptor for PLXNB1, PLXNB2, PLXNB3 and PLXND1 that plays an important role in cell-cell signaling. Regulates glutamatergic and GABAergic synapse development. Promotes the development of inhibitory synapses in a PLXNB1-dependent manner and promotes the development of excitatory synapses in a PLXNB2-dependent manner. Plays a role in priming antigen-specific T-cells, promotes differentiation of Th1 T-helper cells, and thereby contributes to adaptive immunity. Promotes phosphorylation of TIMD2. Inhibits angiogenesis. Promotes axon growth cone collapse. Inhibits axonal extension by providing local signals to specify territories inaccessible for growing axons. The protein is Semaphorin-4A (Sema4a) of Mus musculus (Mouse).